The primary structure comprises 892 residues: Translation initiation factor IF-2 (892 aa).

A disordered region spans residues 88–305; that stretch reads KKRTFVKRDP…SLQQGFQKPA (218 aa). 2 stretches are compositionally biased toward basic and acidic residues: residues 93–159 and 166–216; these read VKRD…KDKV and DMTK…EENK. A compositionally biased stretch (basic residues) spans 254–269; sequence GRGRNAKAARPAKKGK. Over residues 270–282 the composition is skewed to basic and acidic residues; sequence HAESKADREEARA. The 170-residue stretch at 391-560 folds into the tr-type G domain; sequence PRAPVVTIMG…LLQAEVLELK (170 aa). A G1 region spans residues 400 to 407; sequence GHVDHGKT. 400 to 407 provides a ligand contact to GTP; sequence GHVDHGKT. The G2 stretch occupies residues 425 to 429; the sequence is GITQH. The segment at 446–449 is G3; it reads DTPG. GTP contacts are provided by residues 446–450 and 500–503; these read DTPGH and NKID. The tract at residues 500 to 503 is G4; the sequence is NKID. The interval 536–538 is G5; the sequence is SAK.

It belongs to the TRAFAC class translation factor GTPase superfamily. Classic translation factor GTPase family. IF-2 subfamily.

The protein localises to the cytoplasm. One of the essential components for the initiation of protein synthesis. Protects formylmethionyl-tRNA from spontaneous hydrolysis and promotes its binding to the 30S ribosomal subunits. Also involved in the hydrolysis of GTP during the formation of the 70S ribosomal complex. The sequence is that of Translation initiation factor IF-2 from Salmonella agona (strain SL483).